Reading from the N-terminus, the 830-residue chain is Serine/threonine-protein kinase atg1 (830 aa).

A Protein kinase domain is found at 14-307 (YVIRSEIGRG…YDGFFSSIVV (294 aa)). Residues 20–28 (IGRGSFAIV) and lysine 43 each bind ATP. The active-site Proton acceptor is aspartate 157. Position 346 is a phosphoserine (serine 346). Residues 448–468 (TQLSNESLTHEQSINGNSPSP) show a composition bias toward polar residues. Residues 448-480 (TQLSNESLTHEQSINGNSPSPNEGVFQGSFSPE) form a disordered region.

This sequence belongs to the protein kinase superfamily. Ser/Thr protein kinase family. APG1/unc-51/ULK1 subfamily. In terms of assembly, homodimer. Component of the atg1 kinase complex composed of at least atg1, atg13, atg17 and atg101. Interacts directly with atg13. In terms of processing, phosphorylated. Dephosphorylated under depletion of nitrogen.

The enzyme catalyses L-seryl-[protein] + ATP = O-phospho-L-seryl-[protein] + ADP + H(+). It carries out the reaction L-threonyl-[protein] + ATP = O-phospho-L-threonyl-[protein] + ADP + H(+). In terms of biological role, serine/threonine protein kinase involved in the cytoplasm to vacuole transport (Cvt) and found to be essential in autophagy, where it is required for the formation of autophagosomes. Involved in the clearance of protein aggregates which cannot be efficiently cleared by the proteasome. Required for selective autophagic degradation of the nucleus (nucleophagy) as well as for mitophagy which contributes to regulate mitochondrial quantity and quality by eliminating the mitochondria to a basal level to fulfill cellular energy requirements and preventing excess ROS production. Also involved in endoplasmic reticulum-specific autophagic process, in selective removal of ER-associated degradation (ERAD) substrates. Plays a key role in ATG9 and ATG23 cycling through the pre-autophagosomal structure and is necessary to promote ATG18 binding to ATG9 through phosphorylation of ATG9. Catalyzes phosphorylation of ATG4, decreasing the interaction between ATG4 and ATG8 and impairing deconjugation of PE-conjugated forms of ATG8. Autophagy functions to supply nitrogen and is activated when cells cannot access exogenous nitrogen, thus ensuring that they can adapt and subsequently propagate. Finally, atg13 is also required for glycogen storage during stationary phase and has a role in meiosis and sporulation. In Schizosaccharomyces pombe (strain 972 / ATCC 24843) (Fission yeast), this protein is Serine/threonine-protein kinase atg1.